The sequence spans 509 residues: Aspartyl/glutamyl-tRNA(Asn/Gln) amidotransferase subunit B (509 aa).

Belongs to the GatB/GatE family. GatB subfamily. As to quaternary structure, heterotrimer of A, B and C subunits.

It catalyses the reaction L-glutamyl-tRNA(Gln) + L-glutamine + ATP + H2O = L-glutaminyl-tRNA(Gln) + L-glutamate + ADP + phosphate + H(+). It carries out the reaction L-aspartyl-tRNA(Asn) + L-glutamine + ATP + H2O = L-asparaginyl-tRNA(Asn) + L-glutamate + ADP + phosphate + 2 H(+). Allows the formation of correctly charged Asn-tRNA(Asn) or Gln-tRNA(Gln) through the transamidation of misacylated Asp-tRNA(Asn) or Glu-tRNA(Gln) in organisms which lack either or both of asparaginyl-tRNA or glutaminyl-tRNA synthetases. The reaction takes place in the presence of glutamine and ATP through an activated phospho-Asp-tRNA(Asn) or phospho-Glu-tRNA(Gln). This chain is Aspartyl/glutamyl-tRNA(Asn/Gln) amidotransferase subunit B, found in Psychrobacter arcticus (strain DSM 17307 / VKM B-2377 / 273-4).